The primary structure comprises 144 residues: Lysozyme C II (144 aa).

A signal peptide spans 1 to 15 (MRAVVVLLLVAVASA). Positions 16-144 (KVYDRCELAR…LRSYVAGCGV (129 aa)) constitute a C-type lysozyme domain. 4 cysteine pairs are disulfide-bonded: C21-C142, C45-C130, C79-C95, and C91-C109. Residues E50 and D67 contribute to the active site.

The protein localises to the secreted. The catalysed reaction is Hydrolysis of (1-&gt;4)-beta-linkages between N-acetylmuramic acid and N-acetyl-D-glucosamine residues in a peptidoglycan and between N-acetyl-D-glucosamine residues in chitodextrins.. Functionally, lysozymes have primarily a bacteriolytic function; those in tissues and body fluids are associated with the monocyte-macrophage system and enhance the activity of immunoagents. Has antibacterial activity against the Gram positive bacterium P.citreus. Has no antibacterial activity against the Gram negative bacteria E.coli and Y.ruckeri. Does not have hemolytic activity against trout erythrocytes. The polypeptide is Lysozyme C II (Oncorhynchus mykiss (Rainbow trout)).